A 403-amino-acid polypeptide reads, in one-letter code: Vitamin D(3) 25-hydroxylase (403 aa).

A heme-binding site is contributed by C347.

The protein belongs to the cytochrome P450 family. Requires heme as cofactor.

The protein resides in the cytoplasm. The enzyme catalyses 5beta-cholestane-3alpha,7alpha,12alpha-triol + 6 reduced [adrenodoxin] + 3 O2 + 5 H(+) = (25R)-3alpha,7alpha,12alpha-trihydroxy-5beta-cholestan-26-oate + 6 oxidized [adrenodoxin] + 4 H2O. With respect to regulation, activated by partially methylated beta-cyclodextrin. Its function is as follows. Hydroxylates vitamin D(3) into 25-hydroxyvitamin D(3) and 1-alpha,25-dihydroxyvitamin D(3), its physiologically active forms. It first hydroxylates the C-25 position of vitamin D(3) to form 25-hydroxyvitamin D(3), then subsequently hydroxylates the C-1-alpha position to form 1-alpha,25-dihydroxyvitamin D(3). Also displays 25-hydroxylase activity on vitamin D(2) and 7-dehydrocholesterol. May play a role in the biosynthesis of steroid metabolic intermediates. The polypeptide is Vitamin D(3) 25-hydroxylase (Pseudonocardia autotrophica (Amycolata autotrophica)).